A 312-amino-acid chain; its full sequence is Methionyl-tRNA formyltransferase (312 aa).

A (6S)-5,6,7,8-tetrahydrofolate-binding site is contributed by 117–120 (SLLP).

Belongs to the Fmt family.

It carries out the reaction L-methionyl-tRNA(fMet) + (6R)-10-formyltetrahydrofolate = N-formyl-L-methionyl-tRNA(fMet) + (6S)-5,6,7,8-tetrahydrofolate + H(+). Functionally, attaches a formyl group to the free amino group of methionyl-tRNA(fMet). The formyl group appears to play a dual role in the initiator identity of N-formylmethionyl-tRNA by promoting its recognition by IF2 and preventing the misappropriation of this tRNA by the elongation apparatus. The protein is Methionyl-tRNA formyltransferase of Bordetella parapertussis (strain 12822 / ATCC BAA-587 / NCTC 13253).